The sequence spans 351 residues: Phosphate acyltransferase (351 aa).

This sequence belongs to the PlsX family. In terms of assembly, homodimer. Probably interacts with PlsY.

Its subcellular location is the cytoplasm. It catalyses the reaction a fatty acyl-[ACP] + phosphate = an acyl phosphate + holo-[ACP]. Its pathway is lipid metabolism; phospholipid metabolism. Its function is as follows. Catalyzes the reversible formation of acyl-phosphate (acyl-PO(4)) from acyl-[acyl-carrier-protein] (acyl-ACP). This enzyme utilizes acyl-ACP as fatty acyl donor, but not acyl-CoA. This Neisseria meningitidis serogroup C / serotype 2a (strain ATCC 700532 / DSM 15464 / FAM18) protein is Phosphate acyltransferase.